The primary structure comprises 812 residues: Valine--tRNA ligase (812 aa).

The 'HIGH' region signature appears at 46 to 56; it reads PTVSGQLHIGH. The 'KMSKS' region signature appears at 536–540; it reads KMSKS. Lysine 539 lines the ATP pocket.

It belongs to the class-I aminoacyl-tRNA synthetase family. ValS type 2 subfamily. Monomer.

The protein localises to the cytoplasm. It catalyses the reaction tRNA(Val) + L-valine + ATP = L-valyl-tRNA(Val) + AMP + diphosphate. Its function is as follows. Catalyzes the attachment of valine to tRNA(Val). As ValRS can inadvertently accommodate and process structurally similar amino acids such as threonine, to avoid such errors, it has a 'posttransfer' editing activity that hydrolyzes mischarged Thr-tRNA(Val) in a tRNA-dependent manner. This is Valine--tRNA ligase from Rickettsia conorii (strain ATCC VR-613 / Malish 7).